A 190-amino-acid polypeptide reads, in one-letter code: MPLARLVEGEKHDECTYVAASSLLIGRHKMLRSLIYASRRWSSSVGARFSSREELQAYLARPAWQPEDYLPSAEDIARQQLSEEETRKLLKLSGLPEADIQEVRRRLATQLSFVSQLQSVEVDDCADPQYAKAMQRHPAAIGYEELVRRAELDAKDTSLGEKSGSWDSTATATLKKDGYFVLREGLLQKR.

The protein belongs to the GatF family. In terms of assembly, subunit of the heterotrimeric GatFAB amidotransferase (AdT) complex, composed of A, B and F subunits.

It localises to the mitochondrion inner membrane. It carries out the reaction L-glutamyl-tRNA(Gln) + L-glutamine + ATP + H2O = L-glutaminyl-tRNA(Gln) + L-glutamate + ADP + phosphate + H(+). In terms of biological role, allows the formation of correctly charged Gln-tRNA(Gln) through the transamidation of misacylated Glu-tRNA(Gln) in the mitochondria. The reaction takes place in the presence of glutamine and ATP through an activated gamma-phospho-Glu-tRNA(Gln). Required for proper protein synthesis within the mitochondrion. The sequence is that of Glutamyl-tRNA(Gln) amidotransferase subunit F, mitochondrial from Eremothecium gossypii (strain ATCC 10895 / CBS 109.51 / FGSC 9923 / NRRL Y-1056) (Yeast).